Consider the following 242-residue polypeptide: Acetoacetyl-CoA reductase (242 aa).

NADP(+) is bound by residues 12 to 14 (RGI) and 82 to 86 (NAGIT). Substrate is bound by residues aspartate 88 and 141-144 (QAGQ). Tyrosine 147 functions as the Proton acceptor in the catalytic mechanism. 177 to 180 (PGYI) contacts NADP(+). Residue 178-179 (GY) participates in substrate binding.

Belongs to the short-chain dehydrogenases/reductases (SDR) family.

It localises to the cytoplasm. The catalysed reaction is a (3R)-3-hydroxyacyl-CoA + NADP(+) = a 3-oxoacyl-CoA + NADPH + H(+). The protein operates within biopolymer metabolism; poly-(R)-3-hydroxybutanoate biosynthesis. This chain is Acetoacetyl-CoA reductase (phaB), found in Paracoccus denitrificans.